A 182-amino-acid chain; its full sequence is Large ribosomal subunit protein uL5 (182 aa).

It belongs to the universal ribosomal protein uL5 family. Part of the 50S ribosomal subunit; part of the 5S rRNA/L5/L18/L25 subcomplex. Contacts the 5S rRNA and the P site tRNA. Forms a bridge to the 30S subunit in the 70S ribosome.

This is one of the proteins that bind and probably mediate the attachment of the 5S RNA into the large ribosomal subunit, where it forms part of the central protuberance. In the 70S ribosome it contacts protein S13 of the 30S subunit (bridge B1b), connecting the 2 subunits; this bridge is implicated in subunit movement. Contacts the P site tRNA; the 5S rRNA and some of its associated proteins might help stabilize positioning of ribosome-bound tRNAs. The polypeptide is Large ribosomal subunit protein uL5 (Nostoc sp. (strain PCC 7120 / SAG 25.82 / UTEX 2576)).